The chain runs to 580 residues: Small conductance calcium-activated potassium channel protein 2 (580 aa).

Disordered stretches follow at residues 1 to 68 and 88 to 116; these read MSSC…VSKP and GGGG…KKNQ. Low complexity predominate over residues 48–61; the sequence is SSPSAAAAASSSAP. A compositionally biased stretch (gly residues) spans 88–104; the sequence is GGGGGGGGGGGGSGHGS. Residues 140-160 form a helical membrane-spanning segment; the sequence is LIFGMFGIVVMVIETELSWGA. Tyrosine 161 is subject to Phosphotyrosine. A helical transmembrane segment spans residues 169–189; sequence LALKCLISLSTIILLGLIIVY. The chain crosses the membrane as a helical span at residues 215-235; it reads IFFICLEILVCAIHPIPGNYT. A helical membrane pass occupies residues 257–277; that stretch reads IILSIPMFLRLYLIARVMLLH. Residues 306–326 form a helical membrane-spanning segment; it reads LMTICPGTVLLVFSISLWIIA. Residues 346-366 constitute an intramembrane region (pore-forming); it reads FLGAMWLISITFLSIGYGDMV. A helical membrane pass occupies residues 375–395; the sequence is VCLLTGIMGAGCTALVVAVVA. The segment at 413–489 is calmodulin-binding; sequence DTQLTKRVKN…LVDLAKTQNI (77 aa). Residues 551–560 show a composition bias toward basic and acidic residues; the sequence is HVTYNAERSR. Residues 551–580 are disordered; the sequence is HVTYNAERSRSSSRRRRSSSTAPPTSSESS. A compositionally biased stretch (low complexity) spans 569 to 580; the sequence is SSTAPPTSSESS.

The protein belongs to the potassium channel KCNN family. KCa2.2/KCNN2 subfamily. In terms of assembly, homodimer. Heteromultimer with KCNN1 and KCNN3. The complex is composed of 4 channel subunits each of which binds to a calmodulin subunit which regulates the channel activity through calcium-binding. Interacts (via N-terminal domain) with MPP2. In terms of tissue distribution, brain.

It is found in the membrane. It localises to the cytoplasm. The protein resides in the myofibril. The protein localises to the sarcomere. Its subcellular location is the z line. The catalysed reaction is K(+)(in) = K(+)(out). Its activity is regulated as follows. Inhibited by bee venom neurotoxin apamin. Inhibited by UCL 1684 and tetraethylammonium (TEA). Small conductance calcium-activated potassium channel that mediates the voltage-independent transmembrane transfer of potassium across the cell membrane through a constitutive interaction with calmodulin which binds the intracellular calcium allowing its opening. The current is characterized by a voltage-independent activation, an intracellular calcium concentration increase-dependent activation and a single-channel conductance of about 3 picosiemens. Also presents an inwardly rectifying current, thus reducing its already small outward conductance of potassium ions, which is particularly the case when the membrane potential displays positive values, above + 20 mV. The inward rectification could be due to a blockade of the outward current by intracellular divalent cations such as calcium and magnesium and could also be due to an intrinsic property of the channel pore, independent of intracellular divalent ions. There are three positively charged amino acids in the S6 transmembrane domain, close to the pore, that collectively control the conductance and rectification through an electrostatic mechanism. Additionally, electrostatic contributions from these residues also play an important role in determining the intrinsic open probability of the channel in the absence of calcium, affecting the apparent calcium affinity for activation. Forms an heteromeric complex with calmodulin, which is constitutively associated in a calcium-independent manner. Channel opening is triggered when calcium binds the calmodulin resulting in a rotary movement leading to the formation of the dimeric complex to open the gate. Plays a role in the repolarization phase of cardiac action potential. In Rattus norvegicus (Rat), this protein is Small conductance calcium-activated potassium channel protein 2.